Reading from the N-terminus, the 263-residue chain is N-acyl homoserine lactonase AttM (263 aa).

Residues H103, H105, D107, H108, H180, D202, and H247 each coordinate Zn(2+).

This sequence belongs to the metallo-beta-lactamase superfamily. Zn(2+) serves as cofactor.

It catalyses the reaction an N-acyl-L-homoserine lactone + H2O = an N-acyl-L-homoserine + H(+). This Rhizobium johnstonii (strain DSM 114642 / LMG 32736 / 3841) (Rhizobium leguminosarum bv. viciae) protein is N-acyl homoserine lactonase AttM.